Here is a 488-residue protein sequence, read N- to C-terminus: Histamine H1 receptor (488 aa).

The Extracellular segment spans residues 1–29; that stretch reads MSLPNTSSASEDKMCEGNRTAMASPQLLP. Residues asparagine 5 and asparagine 18 are each glycosylated (N-linked (GlcNAc...) asparagine). Residues 30 to 50 traverse the membrane as a helical segment; that stretch reads LVVVLSSISLVTVGLNLLVLY. The Cytoplasmic portion of the chain corresponds to 51-64; that stretch reads AVRSERKLHTVGNL. A helical transmembrane segment spans residues 65–89; that stretch reads YIVSLSVADLIVGAVVMPMNILYLI. Residues 90–97 are Extracellular-facing; sequence MTKWSLGR. The chain crosses the membrane as a helical span at residues 98-123; the sequence is PLCLFWLSMDYVASTASIFSVFILCI. Cysteine 100 and cysteine 180 are oxidised to a cystine. Positions 107 and 112 each coordinate histamine. The important for agonist binding stretch occupies residues 107–112; it reads DYVAST. Over 124-144 the chain is Cytoplasmic; the sequence is DRYRSVQQPLRYLRYRTKTRA. A phosphothreonine mark is found at threonine 140 and threonine 142. The helical transmembrane segment at 145-164 threads the bilayer; it reads SATILGAWFLSFLWVIPILG. Topologically, residues 165-188 are extracellular; the sequence is WHHFTPLAPELREDKCETDFYNVT. A helical transmembrane segment spans residues 189 to 211; that stretch reads WFKIMTAIINFYLPTLLMLWFYV. Asparagine 198 is a histamine binding site. Topologically, residues 212 to 417 are cytoplasmic; the sequence is KIYKAVRRHC…LNRERKAAKQ (206 aa). Residue serine 230 is modified to Phosphoserine. Positions 245–337 are disordered; sequence KEGAKKPGKE…SQPKMDEQSL (93 aa). Residues 322 to 337 are compositionally biased toward polar residues; it reads ANDQTLSQPKMDEQSL. Residues serine 344, serine 347, serine 381, serine 383, serine 397, and serine 399 each carry the phosphoserine modification. Residues 418 to 441 form a helical membrane-spanning segment; it reads LGCIMAAFILCWIPYFIFFMVIAF. The important for agonist binding stretch occupies residues 425 to 429; the sequence is FILCW. Residue tyrosine 432 coordinates histamine. Cysteine 442 and cysteine 445 form a disulfide bridge. Residues 442–447 are Extracellular-facing; sequence CNSCCS. A helical membrane pass occupies residues 448 to 470; that stretch reads EPVHMFTIWLGYINSTLNPLIYP. Residues 471–488 lie on the Cytoplasmic side of the membrane; it reads LCNENFKKTFKKILHIRS.

It belongs to the G-protein coupled receptor 1 family. Phosphorylation at sites in the second and third cytoplasmic loops independently contribute to agonist-induced receptor down-regulation.

Its subcellular location is the cell membrane. Functionally, G-protein-coupled receptor for histamine, a biogenic amine that functions as an immune modulator and a neurotransmitter. Through the H1 receptor, histamine mediates the contraction of smooth muscles and increases capillary permeability due to contraction of terminal venules. Also mediates neurotransmission in the central nervous system and thereby regulates circadian rhythms, emotional and locomotor activities as well as cognitive functions. This is Histamine H1 receptor from Mus musculus (Mouse).